A 670-amino-acid polypeptide reads, in one-letter code: CLK4-associating serine/arginine rich protein (670 aa).

S101 is modified (phosphoserine). Disordered stretches follow at residues 171–232 and 258–670; these read TVAE…GMAD and EKAM…HYRH. The span at 182–214 shows a compositional bias: acidic residues; that stretch reads PEEEESPAEEESNSDEDEVIPDIDVEVDVDELN. Residues 265–283 are compositionally biased toward basic residues; the sequence is RRSRRQRREFREKRLRGRK. S285 and S294 each carry phosphoserine. Residues 290-313 show a composition bias toward basic and acidic residues; it reads ARRDSPTYDPYKRSPSESSSESRS. Phosphothreonine is present on T327. S331 and S335 each carry phosphoserine. Residues 340–355 are compositionally biased toward low complexity; sequence AAAAAAAAASGAATGK. Over residues 356 to 365 the composition is skewed to pro residues; the sequence is PPAPPQPGGP. The span at 378 to 400 shows a compositional bias: low complexity; the sequence is STSSSSSSASRTSSSRSRSSSSS. 2 stretches are compositionally biased toward basic residues: residues 411–443 and 481–491; these read SGRHARSRSRSWSRSRSRSRRYSRSRSRGRRHS and RGGRGPRHHSS. Residues 492 to 529 show a composition bias toward low complexity; sequence SRSSWSLSPSRSRSLTRSRSPSLSRSRSLSRSRSQSHS. S543 bears the Phosphoserine mark. The residue at position 569 (T569) is a Phosphothreonine. Positions 581 to 643 form a coiled coil; sequence ALNRQFKADK…ERQYSRQSRS (63 aa). Composition is skewed to basic and acidic residues over residues 586–613 and 621–637; these read FKADKKAAQEKMIQQEHERQEREDELRA and KERERREKEREEWERQY. The span at 638 to 647 shows a compositional bias: low complexity; it reads SRQSRSPSPR. The segment covering 655-670 has biased composition (basic residues); that stretch reads SRRRSRSRSRSPHYRH.

This sequence belongs to the splicing factor SR family. Probably interacts with CLK4. In terms of processing, phosphorylated in vitro by CLK4.

It localises to the nucleus. Its function is as follows. Probably functions as an alternative splicing regulator. May regulate the mRNA splicing of genes such as CLK1. May act by regulating members of the CLK kinase family. The protein is CLK4-associating serine/arginine rich protein (CLASRP) of Bos taurus (Bovine).